Reading from the N-terminus, the 186-residue chain is ATP synthase subunit delta (186 aa).

It belongs to the ATPase delta chain family. As to quaternary structure, F-type ATPases have 2 components, F(1) - the catalytic core - and F(0) - the membrane proton channel. F(1) has five subunits: alpha(3), beta(3), gamma(1), delta(1), epsilon(1). F(0) has three main subunits: a(1), b(2) and c(10-14). The alpha and beta chains form an alternating ring which encloses part of the gamma chain. F(1) is attached to F(0) by a central stalk formed by the gamma and epsilon chains, while a peripheral stalk is formed by the delta and b chains.

Its subcellular location is the cell inner membrane. Functionally, f(1)F(0) ATP synthase produces ATP from ADP in the presence of a proton or sodium gradient. F-type ATPases consist of two structural domains, F(1) containing the extramembraneous catalytic core and F(0) containing the membrane proton channel, linked together by a central stalk and a peripheral stalk. During catalysis, ATP synthesis in the catalytic domain of F(1) is coupled via a rotary mechanism of the central stalk subunits to proton translocation. This protein is part of the stalk that links CF(0) to CF(1). It either transmits conformational changes from CF(0) to CF(1) or is implicated in proton conduction. The protein is ATP synthase subunit delta of Bradyrhizobium diazoefficiens (strain JCM 10833 / BCRC 13528 / IAM 13628 / NBRC 14792 / USDA 110).